The following is a 421-amino-acid chain: Imidazolonepropionase (421 aa).

Fe(3+)-binding residues include His81 and His83. Zn(2+)-binding residues include His81 and His83. The 4-imidazolone-5-propanoate site is built by Arg90, Tyr153, and His186. N-formimidoyl-L-glutamate is bound at residue Tyr153. Residue His251 coordinates Fe(3+). His251 is a binding site for Zn(2+). A 4-imidazolone-5-propanoate-binding site is contributed by Glu254. Asp326 serves as a coordination point for Fe(3+). Asp326 serves as a coordination point for Zn(2+). N-formimidoyl-L-glutamate is bound by residues Asn328 and Gly330. Residue Ser331 participates in 4-imidazolone-5-propanoate binding.

The protein belongs to the metallo-dependent hydrolases superfamily. HutI family. Zn(2+) serves as cofactor. The cofactor is Fe(3+).

The protein localises to the cytoplasm. It catalyses the reaction 4-imidazolone-5-propanoate + H2O = N-formimidoyl-L-glutamate. Its pathway is amino-acid degradation; L-histidine degradation into L-glutamate; N-formimidoyl-L-glutamate from L-histidine: step 3/3. Its function is as follows. Catalyzes the hydrolytic cleavage of the carbon-nitrogen bond in imidazolone-5-propanoate to yield N-formimidoyl-L-glutamate. It is the third step in the universal histidine degradation pathway. The sequence is that of Imidazolonepropionase from Streptococcus pyogenes serotype M6 (strain ATCC BAA-946 / MGAS10394).